Consider the following 311-residue polypeptide: MRNQEVINKAEMTLSTLESGGIMNPTQASTFIRMVQDTPTILRDARVIQMDHDTQKIEKIGFGQRILRAAQEGVALTKDQKSVPSTSTVNLSTKEVIAEVNITYDTLENNIEKDGLQNTIMQMIAERAAVDIEELLVNGDTSSSDSYLAQLDGIRKQATSHIVDAAGEELTRQTFKRGYKAVPPKYLRIPQEFRFYTSPGIEVEWKDRVADRQTNLGDAAVQGGLSSAFGVPIKGIANLQPYTIGEGDTAADVSDIILTHPKNIILGFSRNIRIEVDKDIRRRMFIIVLTAKLDSVFEEEDAVAKIVKVKE.

This sequence belongs to the encapsulin family. Family 3 subfamily.

Possibly a prophage capsid protein. In Bacillus subtilis (strain 168), this protein is Putative prophage capsid protein YqbE (yqbE).